An 83-amino-acid chain; its full sequence is Large ribosomal subunit protein bL31 (83 aa).

Belongs to the bacterial ribosomal protein bL31 family. Type A subfamily. Part of the 50S ribosomal subunit.

Its function is as follows. Binds the 23S rRNA. The chain is Large ribosomal subunit protein bL31 from Synechococcus sp. (strain CC9605).